A 539-amino-acid polypeptide reads, in one-letter code: Nucleobase-ascorbate transporter 8 (539 aa).

The tract at residues 1–20 (MAGDGVENAKPPQKQEDLQP) is disordered. 12 consecutive transmembrane segments (helical) span residues 44–64 (ILLG…IPTM), 79–99 (LIQT…FFGT), 101–121 (LPAV…IVLA), 141–161 (IQGA…SGLW), 167–187 (FLSP…LYEQ), 189–209 (FPML…LVIF), 229–249 (FAVI…TIGG), 295–315 (IFAM…TYIA), 368–388 (VGSR…SILG), 399–421 (APIV…LSLI), 433–453 (FILG…YQYT), and 470–490 (NIIN…AFFL).

This sequence belongs to the nucleobase:cation symporter-2 (NCS2) (TC 2.A.40) family. Highly expressed in ovules, endosperm and embryo.

The protein localises to the cell membrane. In Arabidopsis thaliana (Mouse-ear cress), this protein is Nucleobase-ascorbate transporter 8 (NAT8).